Reading from the N-terminus, the 192-residue chain is ADP-ribose glycohydrolase AF_1521 (192 aa).

A Macro domain is found at 1 to 192 (MEVLFEAKVG…VALKVFERSL (192 aa)). Substrate contacts are provided by residues 19–21 (GDI), 32–34 (AAN), 39–44 (HGGGVA), and 140–146 (VSAGIYG).

The enzyme catalyses 5-O-(ADP-D-ribosyl)-L-glutamyl-[protein] + H2O = L-glutamyl-[protein] + ADP-D-ribose + H(+). It catalyses the reaction 4-O-(ADP-D-ribosyl)-L-aspartyl-[protein] + H2O = L-aspartyl-[protein] + ADP-D-ribose + H(+). The catalysed reaction is alpha-NAD(+) + H2O = ADP-D-ribose + nicotinamide + H(+). In terms of biological role, removes ADP-ribose from aspartate and glutamate residues in proteins bearing a single ADP-ribose moiety. Inactive towards proteins bearing poly-ADP-ribose. Catalyzes removal of a phosphate group from ADP-ribose 1''-phosphate (Appr1p), but with low efficiency. The chain is ADP-ribose glycohydrolase AF_1521 from Archaeoglobus fulgidus (strain ATCC 49558 / DSM 4304 / JCM 9628 / NBRC 100126 / VC-16).